We begin with the raw amino-acid sequence, 245 residues long: Fumarate reductase iron-sulfur subunit (245 aa).

One can recognise a 2Fe-2S ferredoxin-type domain in the interval 17–98 (PQSAVNKPHF…NGVITLMPMP (82 aa)). [2Fe-2S] cluster is bound by residues Cys60, Cys65, Cys68, and Cys80. Positions 145 to 174 (AQEVFELDRCIECGCCIASCGTKLMRPNFI) constitute a 4Fe-4S ferredoxin-type domain. [4Fe-4S] cluster is bound by residues Cys154, Cys157, and Cys160. Residues Cys164, Cys211, and Cys217 each contribute to the [3Fe-4S] cluster site. Residue Cys221 coordinates [4Fe-4S] cluster.

It belongs to the succinate dehydrogenase/fumarate reductase iron-sulfur protein family. Part of an enzyme complex containing three subunits: a flavoprotein (frdA), an iron-sulfur protein (frdB), and diheme cytochrome b (frdC). [2Fe-2S] cluster is required as a cofactor. Requires [3Fe-4S] cluster as cofactor. It depends on [4Fe-4S] cluster as a cofactor.

The catalysed reaction is a menaquinone + succinate = a menaquinol + fumarate. This Helicobacter pylori (strain J99 / ATCC 700824) (Campylobacter pylori J99) protein is Fumarate reductase iron-sulfur subunit (frdB).